Here is a 35-residue protein sequence, read N- to C-terminus: Beta-amanitin proprotein (35 aa).

Residues 1 to 10 (MSDINATRLP) constitute a propeptide that is removed on maturation. The cyclopeptide (Ile-Pro) cross-link spans 11–18 (IWGIGCDP). The segment at residues 12–16 (WGIGC) is a cross-link (2'-cysteinyl-6'-hydroxytryptophan sulfoxide (Trp-Cys)). The propeptide occupies 19 to 35 (CVGDDVTALLTRGEALC).

The protein belongs to the MSDIN fungal toxin family. In terms of processing, processed by the macrocyclase-peptidase enzyme POPB to yield a toxic cyclic octapeptide. POPB first removes 10 residues from the N-terminus. Conformational trapping of the remaining peptide forces the enzyme to release this intermediate rather than proceed to macrocyclization. The enzyme rebinds the remaining peptide in a different conformation and catalyzes macrocyclization of the N-terminal 8 residues. As to expression, expressed in basidiocarps.

Its function is as follows. Toxin belonging to the bicyclic octapeptides amatoxins that acts by binding non-competitively to RNA polymerase II and greatly slowing the elongation of transcripts from target promoters. In Amanita exitialis (Guangzhou destroying angel), this protein is Beta-amanitin proprotein.